The sequence spans 241 residues: MAANIIATKAATKMASKKEHQYCLLDSQEKRHGQHPFSFELKPYGQTGGNIIGVQGSLTHVIKMIVFPFMIPFPLQKTHIDDFIGGRVYLFFKELDMQAVSDVNGMQYHFEFKVVPVSSNQVELLPVNNKYKFTYAIPEVQYLTPIFYDLSGPLDFPLDTLSVHVDSLTNHIHLPIQNHNLTKGDRVFISGYKHPQTIESYKNNTIFIKCIPPLLSEKINLYIPKNRIRIPLYFKSLKTSK.

This sequence belongs to the asfivirus H240R family.

It localises to the virion. Its function is as follows. Forms the penton at the fivefold vertices of the icosahedral capsid. Together with the minor capsid proteins (p17, p49, and M1249L), forms a complicated network immediately below the outer capsid shell, stabilizing the whole capsid. This African swine fever virus (isolate Tick/Malawi/Lil 20-1/1983) (ASFV) protein is Penton protein H240R.